Reading from the N-terminus, the 270-residue chain is tRNA pseudouridine synthase A (270 aa).

Catalysis depends on D60, which acts as the Nucleophile. An RNA binding region spans residues 107–111 (FHARF). Y118 lines the substrate pocket. Residues 168-172 (QCQSR) form an interaction with tRNA region.

Belongs to the tRNA pseudouridine synthase TruA family. As to quaternary structure, homodimer.

It catalyses the reaction uridine(38/39/40) in tRNA = pseudouridine(38/39/40) in tRNA. In terms of biological role, formation of pseudouridine at positions 38, 39 and 40 in the anticodon stem and loop of transfer RNAs. The protein is tRNA pseudouridine synthase A of Enterobacter sp. (strain 638).